A 418-amino-acid chain; its full sequence is Histidine--tRNA ligase (418 aa).

This sequence belongs to the class-II aminoacyl-tRNA synthetase family.

The protein localises to the cytoplasm. The enzyme catalyses tRNA(His) + L-histidine + ATP = L-histidyl-tRNA(His) + AMP + diphosphate + H(+). The sequence is that of Histidine--tRNA ligase from Methanococcus vannielii (strain ATCC 35089 / DSM 1224 / JCM 13029 / OCM 148 / SB).